The primary structure comprises 339 residues: Nitrilase (339 aa).

The CN hydrolase domain maps to 7–277; sequence YRVAAVQASP…EGITYADIDL (271 aa). Glutamate 47 functions as the Proton acceptor in the catalytic mechanism. Residue lysine 128 is the Proton donor of the active site. Cysteine 162 serves as the catalytic Nucleophile.

It belongs to the carbon-nitrogen hydrolase superfamily. Nitrilase family.

It carries out the reaction a nitrile + 2 H2O = a carboxylate + NH4(+). The chain is Nitrilase (nit) from Bacillus sp. (strain OxB-1).